The primary structure comprises 556 residues: CDP-diacylglycerol--glycerol-3-phosphate 3-phosphatidyltransferase, mitochondrial (556 aa).

The N-terminal 28 residues, 1-28 (MAVAAAAAAGPVFWRRLLGLLPGRPGLA), are a transit peptide targeting the mitochondrion. The residue at position 49 (Ser49) is a Phosphoserine. 124-131 (ASLYLGTG) is an ATP binding site. PLD phosphodiesterase domains lie at 215 to 241 (TIGL…SDSY) and 460 to 493 (RGWT…GYRS). Catalysis depends on residues His220, Lys222, and Asp227.

This sequence belongs to the CDP-alcohol phosphatidyltransferase class-II family.

It is found in the mitochondrion. It carries out the reaction a CDP-1,2-diacyl-sn-glycerol + sn-glycerol 3-phosphate = a 1,2-diacyl-sn-glycero-3-phospho-(1'-sn-glycero-3'-phosphate) + CMP + H(+). Its pathway is phospholipid metabolism; phosphatidylglycerol biosynthesis; phosphatidylglycerol from CDP-diacylglycerol: step 1/2. Its activity is regulated as follows. Activated by calcium and magnesium and inhibited by other bivalent cations. Its function is as follows. Functions in the biosynthesis of the anionic phospholipids phosphatidylglycerol and cardiolipin. The protein is CDP-diacylglycerol--glycerol-3-phosphate 3-phosphatidyltransferase, mitochondrial (PGS1) of Pongo abelii (Sumatran orangutan).